The following is a 213-amino-acid chain: MKNQASSTVALIDYGAGNLRSVANALLASGLARENLVVTANPDEVLQADRVVLPGVGAFASCMQALKAIPDMVPALEKAVLEKGRPFLGICVGMQLLADQGEEYGVHQGLGWIKGKVTPLRPNDPSCKVPHMGWNQIGLTTDSHPLLRAGEAYFLHSYAFVPEDESTLLATTEHGGLVTAAVGRDNIMGVQFHPEKSQSYGLEFLSRFLDWNP.

Positions 8 to 213 (TVALIDYGAG…FLSRFLDWNP (206 aa)) constitute a Glutamine amidotransferase type-1 domain. The Nucleophile role is filled by Cys91. Residues His193 and Glu195 contribute to the active site.

In terms of assembly, heterodimer of HisH and HisF.

The protein localises to the cytoplasm. The enzyme catalyses 5-[(5-phospho-1-deoxy-D-ribulos-1-ylimino)methylamino]-1-(5-phospho-beta-D-ribosyl)imidazole-4-carboxamide + L-glutamine = D-erythro-1-(imidazol-4-yl)glycerol 3-phosphate + 5-amino-1-(5-phospho-beta-D-ribosyl)imidazole-4-carboxamide + L-glutamate + H(+). It catalyses the reaction L-glutamine + H2O = L-glutamate + NH4(+). It participates in amino-acid biosynthesis; L-histidine biosynthesis; L-histidine from 5-phospho-alpha-D-ribose 1-diphosphate: step 5/9. In terms of biological role, IGPS catalyzes the conversion of PRFAR and glutamine to IGP, AICAR and glutamate. The HisH subunit catalyzes the hydrolysis of glutamine to glutamate and ammonia as part of the synthesis of IGP and AICAR. The resulting ammonia molecule is channeled to the active site of HisF. This chain is Imidazole glycerol phosphate synthase subunit HisH, found in Zymomonas mobilis subsp. mobilis (strain ATCC 31821 / ZM4 / CP4).